The sequence spans 129 residues: Large ribosomal subunit protein bL12 (129 aa).

This sequence belongs to the bacterial ribosomal protein bL12 family. In terms of assembly, homodimer. Part of the ribosomal stalk of the 50S ribosomal subunit. Forms a multimeric L10(L12)X complex, where L10 forms an elongated spine to which 2 to 4 L12 dimers bind in a sequential fashion. Binds GTP-bound translation factors.

Functionally, forms part of the ribosomal stalk which helps the ribosome interact with GTP-bound translation factors. Is thus essential for accurate translation. The polypeptide is Large ribosomal subunit protein bL12 (Pelotomaculum thermopropionicum (strain DSM 13744 / JCM 10971 / SI)).